A 441-amino-acid polypeptide reads, in one-letter code: MSCCKVPVLIEAQVEMVSANELENKSLFRQEEDATQTKEASLMEQGSLSTSFPQHTPKAPKNSVLNSIKIVIFCNKLNLLLPFGPLAILVHYMIDSKGWVFLLTLVGITPLAERLGYATEQLACYTGPTVGGLLNATFGNVTELIISIFALKNGMIRVVQLTLLGSILSNMLLVLGCAFFCGGLVFYQKDQVFDKGIATVNSGLLLMAVMGILFPAVLHYTHSEVHAGSSELALSRFSSCIMLIAYAAYLFFQLKSQSNSYSPLDEESNQNEETSAEDEDPEISKWEAIIWLSILTAWVSLLSGYLVDAIEGASVSWNIPIAFISTILLPIVGNAAEHAGAIMFAMKDKLDLSLGVAIGSSIQISMFAVPFCVVIGWMMGQQMDLNFQLFETAMLFITVIVVAFFLQEGSSNYFKGLMLILCYLIVAASFFVHEDPHQDGI.

At 1–69 (MSCCKVPVLI…PKNSVLNSIK (69 aa)) the chain is on the cytoplasmic side. Residues 70–90 (IVIFCNKLNLLLPFGPLAILV) traverse the membrane as a helical segment. At 91–97 (HYMIDSK) the chain is on the extracellular side. A helical transmembrane segment spans residues 98–118 (GWVFLLTLVGITPLAERLGYA). The Cytoplasmic segment spans residues 119–129 (TEQLACYTGPT). The chain crosses the membrane as a helical span at residues 130-150 (VGGLLNATFGNVTELIISIFA). The cation selection stretch occupies residues 139 to 174 (GNVTELIISIFALKNGMIRVVQLTLLGSILSNMLLV). The Extracellular portion of the chain corresponds to 151–166 (LKNGMIRVVQLTLLGS). The chain crosses the membrane as a helical span at residues 167-187 (ILSNMLLVLGCAFFCGGLVFY). The Cytoplasmic portion of the chain corresponds to 188–196 (QKDQVFDKG). Residues 197–217 (IATVNSGLLLMAVMGILFPAV) traverse the membrane as a helical segment. Topologically, residues 218 to 231 (LHYTHSEVHAGSSE) are extracellular. The helical transmembrane segment at 232–252 (LALSRFSSCIMLIAYAAYLFF) threads the bilayer. The Cytoplasmic portion of the chain corresponds to 253-286 (QLKSQSNSYSPLDEESNQNEETSAEDEDPEISKW). A helical membrane pass occupies residues 287-307 (EAIIWLSILTAWVSLLSGYLV). Residues 308-311 (DAIE) lie on the Extracellular side of the membrane. Residues 312-332 (GASVSWNIPIAFISTILLPIV) traverse the membrane as a helical segment. The Cytoplasmic portion of the chain corresponds to 333 to 354 (GNAAEHAGAIMFAMKDKLDLSL). A cation selection region spans residues 333-368 (GNAAEHAGAIMFAMKDKLDLSLGVAIGSSIQISMFA). Residues 355 to 375 (GVAIGSSIQISMFAVPFCVVI) form a helical membrane-spanning segment. Over 376–384 (GWMMGQQMD) the chain is Extracellular. A helical transmembrane segment spans residues 385–405 (LNFQLFETAMLFITVIVVAFF). At 406–412 (LQEGSSN) the chain is on the cytoplasmic side. The helical transmembrane segment at 413–433 (YFKGLMLILCYLIVAASFFVH) threads the bilayer. Residues 434-441 (EDPHQDGI) lie on the Extracellular side of the membrane.

Belongs to the Ca(2+):cation antiporter (CaCA) (TC 2.A.19) family. Cation/proton exchanger (CAX) subfamily.

The protein localises to the vacuole membrane. Inhibited by excess of Ca(2+) and Cd(2+), Mn(2+), and Zn(2+). Its function is as follows. Vacuolar cation/proton exchanger (CAX). Translocates Ca(2+) and other metal ions into vacuoles using the proton gradient formed by H(+)-ATPase and H(+)-pyrophosphatase. In Arabidopsis thaliana (Mouse-ear cress), this protein is Vacuolar cation/proton exchanger 2 (CAX2).